The sequence spans 135 residues: C-type lectin APL (135 aa).

Cystine bridges form between Cys3/Cys14, Cys31/Cys131, Cys38/Cys133, and Cys106/Cys123. Positions 10 to 132 (MNGLCYKIFD…CESKNAFLCQ (123 aa)) constitute a C-type lectin domain. Positions 96, 98, 104, 119, and 120 each coordinate Ca(2+). A Galactose-binding motif is present at residues 96–98 (QPD).

Belongs to the true venom lectin family. In terms of assembly, homodimer; disulfide-linked. Expressed by the venom gland.

It is found in the secreted. Its function is as follows. Beta-galactoside lectin that agglutinates rabbit and human erythrocytes in a calcium-dependent fashion (MHC is 0.21 ug/ml on rabbit erythrocytes). Galactose (15 mM), lactose (20 mM), rhamnose (20 mM) and EGTA strongly inhibit this activity. This Agkistrodon piscivorus piscivorus (Eastern cottonmouth) protein is C-type lectin APL.